The sequence spans 164 residues: V-type proton ATPase subunit c' (164 aa).

The Lumenal portion of the chain corresponds to 1 to 15 (MTDDLVNEYAPAFAP). The chain crosses the membrane as a helical span at residues 16 to 36 (FFGFAGCAAAMILSSLGAAIG). The Cytoplasmic portion of the chain corresponds to 37 to 58 (TAKSGIGISGIGTFRPELIMKS). A helical membrane pass occupies residues 59 to 79 (LIPVVMSGILAVYGLVVAVLV). The Lumenal portion of the chain corresponds to 80-97 (AGGLSPTEEYTLFNGFMH). Residues 98 to 118 (LAAGLCVGFACLSSGYAIGIV) traverse the membrane as a helical segment. Residues 119–135 (GDVGVRKFMHQPRLFVG) lie on the Cytoplasmic side of the membrane. A helical transmembrane segment spans residues 136 to 156 (IVLILIFAEVLGLYGMIIALI). The Lumenal portion of the chain corresponds to 157-164 (LNTRGSGN).

The protein belongs to the V-ATPase proteolipid subunit family. As to quaternary structure, V-ATPase is a heteromultimeric enzyme composed of a peripheral catalytic V1 complex (components A to H) attached to an integral membrane V0 proton pore complex (components: a, c, c', c'', d, e, f and VOA1). The decameric c-ring forms the proton-conducting pore, and is composed of eight proteolipid subunits c, one subunit c' and one subunit c''.

It is found in the vacuole membrane. Functionally, proton-conducting pore forming subunit of the V0 complex of vacuolar(H+)-ATPase (V-ATPase), a multisubunit enzyme composed of a peripheral complex (V1) that hydrolyzes ATP and a membrane integral complex (V0) that translocates protons. V-ATPase is responsible for acidifying and maintaining the pH of intracellular compartments. The protein is V-type proton ATPase subunit c' (VMA11) of Eremothecium gossypii (strain ATCC 10895 / CBS 109.51 / FGSC 9923 / NRRL Y-1056) (Yeast).